Here is a 527-residue protein sequence, read N- to C-terminus: Probable malate:quinone oxidoreductase (527 aa).

This sequence belongs to the MQO family. FAD serves as cofactor.

The catalysed reaction is (S)-malate + a quinone = a quinol + oxaloacetate. The protein operates within carbohydrate metabolism; tricarboxylic acid cycle; oxaloacetate from (S)-malate (quinone route): step 1/1. In Pectobacterium carotovorum subsp. carotovorum (strain PC1), this protein is Probable malate:quinone oxidoreductase.